The sequence spans 295 residues: Probable intramembrane protease C25B8.17 (295 aa).

Residues 1 to 21 form a helical membrane-spanning segment; sequence MEGVILASSALFTVYIGAKWS. Residues 22–35 lie on the Cytoplasmic side of the membrane; the sequence is AQEEEPEEKQLINK. A helical transmembrane segment spans residues 36 to 56; sequence RLAVLFPIFGGVTLVLMYLAL. Residues 57 to 63 lie on the Lumenal side of the membrane; it reads RYLSKEY. Residues 64–84 traverse the membrane as a helical segment; sequence IQLILQGYASLASIICFVRSF. Over 85–89 the chain is Cytoplasmic; sequence NPKTT. A helical transmembrane segment spans residues 90–106; it reads FGKITATMSSIAIALFY. The Lumenal segment spans residues 107–111; that stretch reads FKTKH. A helical transmembrane segment spans residues 112–130; it reads WMASNILAWALAANSISIM. The Cytoplasmic portion of the chain corresponds to 131 to 139; it reads RIDSYNTGA. The helical transmembrane segment at 140-160 threads the bilayer; it reads LLLGALFFYDIYFVFGTEVMV. Residue Asp-149 is part of the active site. Residues 161–183 are Lumenal-facing; the sequence is TVATGIDIPAKYVLPQFKNPTRL. A helical membrane pass occupies residues 184–204; sequence SMLGLGDIVMPGLMLALMYRF. Residue Asp-190 is part of the active site. Residues 205–221 lie on the Cytoplasmic side of the membrane; it reads DLHYYINSTSQPKKHST. The chain crosses the membrane as a helical span at residues 222 to 244; sequence YFRNTFIAYGLGLGVTNFALYYF. The Lumenal segment spans residues 245–249; sequence KAAQP. The short motif at 249-251 is the PAL element; sequence PAL. A helical membrane pass occupies residues 250–268; it reads ALLYLSPACIVAPLLTAWY. Residues 269 to 295 lie on the Cytoplasmic side of the membrane; that stretch reads RDELKTLFSFRSETEDETDEQDKCKST.

The protein belongs to the peptidase A22B family.

It localises to the endoplasmic reticulum membrane. It is found in the golgi apparatus membrane. The protein is Probable intramembrane protease C25B8.17 of Schizosaccharomyces pombe (strain 972 / ATCC 24843) (Fission yeast).